A 197-amino-acid polypeptide reads, in one-letter code: Nucleoside triphosphate pyrophosphatase (197 aa).

The Proton acceptor role is filled by D72.

This sequence belongs to the Maf family. It depends on a divalent metal cation as a cofactor.

It localises to the cytoplasm. It catalyses the reaction a ribonucleoside 5'-triphosphate + H2O = a ribonucleoside 5'-phosphate + diphosphate + H(+). The enzyme catalyses a 2'-deoxyribonucleoside 5'-triphosphate + H2O = a 2'-deoxyribonucleoside 5'-phosphate + diphosphate + H(+). In terms of biological role, nucleoside triphosphate pyrophosphatase. May have a dual role in cell division arrest and in preventing the incorporation of modified nucleotides into cellular nucleic acids. This is Nucleoside triphosphate pyrophosphatase from Corynebacterium efficiens (strain DSM 44549 / YS-314 / AJ 12310 / JCM 11189 / NBRC 100395).